Here is a 418-residue protein sequence, read N- to C-terminus: Trimethyllysine dioxygenase, mitochondrial (418 aa).

Residues histidine 239, aspartate 241, and histidine 386 each contribute to the Fe cation site.

It belongs to the gamma-BBH/TMLD family. In terms of assembly, homodimer. Fe(2+) is required as a cofactor. Requires L-ascorbate as cofactor.

Its subcellular location is the mitochondrion matrix. It carries out the reaction N(6),N(6),N(6)-trimethyl-L-lysine + 2-oxoglutarate + O2 = (3S)-3-hydroxy-N(6),N(6),N(6)-trimethyl-L-lysine + succinate + CO2. It participates in amine and polyamine biosynthesis; carnitine biosynthesis. Functionally, converts trimethyllysine (TML) into hydroxytrimethyllysine (HTML). The polypeptide is Trimethyllysine dioxygenase, mitochondrial (TMLHE) (Gallus gallus (Chicken)).